Reading from the N-terminus, the 303-residue chain is Glycine--tRNA ligase alpha subunit (303 aa).

Belongs to the class-II aminoacyl-tRNA synthetase family. As to quaternary structure, tetramer of two alpha and two beta subunits.

It is found in the cytoplasm. The catalysed reaction is tRNA(Gly) + glycine + ATP = glycyl-tRNA(Gly) + AMP + diphosphate. In Salmonella arizonae (strain ATCC BAA-731 / CDC346-86 / RSK2980), this protein is Glycine--tRNA ligase alpha subunit.